The chain runs to 553 residues: Dihydroxy-acid dehydratase (553 aa).

Residue cysteine 49 participates in [2Fe-2S] cluster binding. Aspartate 81 is a Mg(2+) binding site. Cysteine 122 contributes to the [2Fe-2S] cluster binding site. 2 residues coordinate Mg(2+): aspartate 123 and lysine 124. Lysine 124 is modified (N6-carboxylysine). Cysteine 194 provides a ligand contact to [2Fe-2S] cluster. Glutamate 444 is a binding site for Mg(2+). The active-site Proton acceptor is the serine 470.

Belongs to the IlvD/Edd family. As to quaternary structure, homodimer. [2Fe-2S] cluster serves as cofactor. Mg(2+) is required as a cofactor.

It carries out the reaction (2R)-2,3-dihydroxy-3-methylbutanoate = 3-methyl-2-oxobutanoate + H2O. It catalyses the reaction (2R,3R)-2,3-dihydroxy-3-methylpentanoate = (S)-3-methyl-2-oxopentanoate + H2O. Its pathway is amino-acid biosynthesis; L-isoleucine biosynthesis; L-isoleucine from 2-oxobutanoate: step 3/4. It participates in amino-acid biosynthesis; L-valine biosynthesis; L-valine from pyruvate: step 3/4. Functionally, functions in the biosynthesis of branched-chain amino acids. Catalyzes the dehydration of (2R,3R)-2,3-dihydroxy-3-methylpentanoate (2,3-dihydroxy-3-methylvalerate) into 2-oxo-3-methylpentanoate (2-oxo-3-methylvalerate) and of (2R)-2,3-dihydroxy-3-methylbutanoate (2,3-dihydroxyisovalerate) into 2-oxo-3-methylbutanoate (2-oxoisovalerate), the penultimate precursor to L-isoleucine and L-valine, respectively. The polypeptide is Dihydroxy-acid dehydratase (Aeropyrum pernix (strain ATCC 700893 / DSM 11879 / JCM 9820 / NBRC 100138 / K1)).